We begin with the raw amino-acid sequence, 318 residues long: MKPLNIIFAGTPDFAARHLQALLNSHHNVIGVYTQPDRPAGRGKKLTASPVKELAVGNNIPVYQPGSLRKEPAQQELAALNADIMVVVAYGLILPKVVLNTPRLGCINVHGSILPRWRGAAPIQRALWAGDKETGVTVMQMDVGLDTGDMLLKTTLPIEDSDTSASLYEKLAEQGPVALLQALEGLANGTLAAEKQDEALANYAEKLSKEEARLDWNKSAQQLWQEVRAFNPWPVSYFEHQGNTIKVWQTQVSETTSTAAPGTIISASKKGIEVATADGVLTLLNMQLPGKKPLNVADILNARGEWFSPNTRLANEAQ.

112–115 (SILP) provides a ligand contact to (6S)-5,6,7,8-tetrahydrofolate.

The protein belongs to the Fmt family.

It carries out the reaction L-methionyl-tRNA(fMet) + (6R)-10-formyltetrahydrofolate = N-formyl-L-methionyl-tRNA(fMet) + (6S)-5,6,7,8-tetrahydrofolate + H(+). Functionally, attaches a formyl group to the free amino group of methionyl-tRNA(fMet). The formyl group appears to play a dual role in the initiator identity of N-formylmethionyl-tRNA by promoting its recognition by IF2 and preventing the misappropriation of this tRNA by the elongation apparatus. This Shewanella baltica (strain OS185) protein is Methionyl-tRNA formyltransferase.